Here is a 226-residue protein sequence, read N- to C-terminus: E3 ubiquitin-protein ligase RNF186 (226 aa).

An RING-type zinc finger spans residues 39–85 (CLVCREPYNCARSPKLLSCQHTFCAVCLKLLLYVQEDTWSIPCPLCR). A run of 2 helical transmembrane segments spans residues 157–177 (HLLL…PGVI) and 179–199 (WVLA…CCHP).

In terms of assembly, interacts with BNIP1. Polyubiquitinated. 'Lys-29'-linked autoubiquitination leads to proteasomal degradation.

It localises to the endoplasmic reticulum membrane. The enzyme catalyses S-ubiquitinyl-[E2 ubiquitin-conjugating enzyme]-L-cysteine + [acceptor protein]-L-lysine = [E2 ubiquitin-conjugating enzyme]-L-cysteine + N(6)-ubiquitinyl-[acceptor protein]-L-lysine.. It functions in the pathway protein modification; protein ubiquitination. Functionally, E3 ubiquitin protein ligase that is part of an apoptotic signaling pathway activated by endoplasmic reticulum stress. Stimulates the expression of proteins specific of the unfolded protein response (UPR), ubiquitinates BNIP1 and regulates its localization to the mitochondrion and induces calcium release from the endoplasmic reticulum that ultimately leads to cell apoptosis. Plays a role in the maintenance of intestinal homeostasis and clearance of enteric pathogens. Upon NOD2 stimulation, ubiquitinates the ER stress sensor activating transcription factor 6/ATF6 and promotes the unfolded protein response UPR. Participates in basal level of autophagy maintenance by regulating the ubiquitination of EPHB2. Upon stimulation by ligand EFNB1, ubiquitinates EPHB2 and further recruits MAP1LC3B for autophagy induction. Controls nutrient sensing by ubiquitinating Sestrin-2/SESN2, which is an intracellular sensor of cytosolic leucine and inhibitor of mTORC1 activity. This Mus musculus (Mouse) protein is E3 ubiquitin-protein ligase RNF186.